Reading from the N-terminus, the 82-residue chain is Cytochrome b559 subunit alpha (82 aa).

The helical transmembrane segment at 21–35 threads the bilayer; it reads VIHSITVPALFIAGW. His-23 is a binding site for heme.

It belongs to the PsbE/PsbF family. Heterodimer of an alpha subunit and a beta subunit. PSII is composed of 1 copy each of membrane proteins PsbA, PsbB, PsbC, PsbD, PsbE, PsbF, PsbH, PsbI, PsbJ, PsbK, PsbL, PsbM, PsbT, PsbX, PsbY, PsbZ, Psb30/Ycf12, at least 3 peripheral proteins of the oxygen-evolving complex and a large number of cofactors. It forms dimeric complexes. The cofactor is heme b.

Its subcellular location is the plastid. The protein localises to the chloroplast thylakoid membrane. In terms of biological role, this b-type cytochrome is tightly associated with the reaction center of photosystem II (PSII). PSII is a light-driven water:plastoquinone oxidoreductase that uses light energy to abstract electrons from H(2)O, generating O(2) and a proton gradient subsequently used for ATP formation. It consists of a core antenna complex that captures photons, and an electron transfer chain that converts photonic excitation into a charge separation. This is Cytochrome b559 subunit alpha from Chlamydomonas reinhardtii (Chlamydomonas smithii).